The chain runs to 200 residues: MSAGKAQIGKPAPEFQAKAVMPGGEFKDIKLADYRGKYVVFFFYPLDFTFVCPTEIIAFSDRAEEFRKINCELIAASVDSHFCHLAWTNTSRKEGGLGSMKIPLVADTKRTISQDYGVLKEDEGISFRGLFIIDDKGILRQITINDLPVGRSVDETLRLVQAFQHTDKFGEVCPAGWKPGSDTIKPDISKSKEYFSKQKA.

Residues alanine 6 to histidine 165 enclose the Thioredoxin domain. Catalysis depends on cysteine 52, which acts as the Cysteine sulfenic acid (-SOH) intermediate.

Belongs to the peroxiredoxin family. AhpC/Prx1 subfamily. As to quaternary structure, homodimer; disulfide-linked, upon oxidation.

The catalysed reaction is a hydroperoxide + [thioredoxin]-dithiol = an alcohol + [thioredoxin]-disulfide + H2O. Functionally, thiol-specific peroxidase that catalyzes the reduction of hydrogen peroxide and organic hydroperoxides to water and alcohols, respectively. Plays a role in cell protection against oxidative stress by detoxifying peroxides and as sensor of hydrogen peroxide-mediated signaling events. This Cynops pyrrhogaster (Japanese fire-bellied newt) protein is Peroxiredoxin.